Consider the following 167-residue polypeptide: Endoribonuclease YbeY (167 aa).

Zn(2+) contacts are provided by His-131, His-135, and His-141.

This sequence belongs to the endoribonuclease YbeY family. It depends on Zn(2+) as a cofactor.

The protein resides in the cytoplasm. Single strand-specific metallo-endoribonuclease involved in late-stage 70S ribosome quality control and in maturation of the 3' terminus of the 16S rRNA. The protein is Endoribonuclease YbeY of Rickettsia prowazekii (strain Madrid E).